The primary structure comprises 466 residues: Ribulose bisphosphate carboxylase large chain (466 aa).

At K5 the chain carries N6,N6,N6-trimethyllysine. Substrate is bound by residues N114 and T164. K166 acts as the Proton acceptor in catalysis. K168 lines the substrate pocket. K192, D194, and E195 together coordinate Mg(2+). K192 carries the N6-carboxylysine modification. Catalysis depends on H285, which acts as the Proton acceptor. The substrate site is built by R286, H318, and S370.

It belongs to the RuBisCO large chain family. Type I subfamily. Heterohexadecamer of 8 large chains and 8 small chains; disulfide-linked. The disulfide link is formed within the large subunit homodimers. Mg(2+) is required as a cofactor. In terms of processing, the disulfide bond which can form in the large chain dimeric partners within the hexadecamer appears to be associated with oxidative stress and protein turnover.

The protein resides in the plastid. Its subcellular location is the chloroplast. The catalysed reaction is 2 (2R)-3-phosphoglycerate + 2 H(+) = D-ribulose 1,5-bisphosphate + CO2 + H2O. It carries out the reaction D-ribulose 1,5-bisphosphate + O2 = 2-phosphoglycolate + (2R)-3-phosphoglycerate + 2 H(+). Functionally, ruBisCO catalyzes two reactions: the carboxylation of D-ribulose 1,5-bisphosphate, the primary event in carbon dioxide fixation, as well as the oxidative fragmentation of the pentose substrate in the photorespiration process. Both reactions occur simultaneously and in competition at the same active site. The chain is Ribulose bisphosphate carboxylase large chain from Adenium obesum (Desert rose).